A 317-amino-acid polypeptide reads, in one-letter code: MAETEAGLEADEPTEDDTLPSDTVSLSDSDSDLSLPSGVEVQVLSPERLSEEGQEDSGPEDPPSPPTGTLTTAVQPFHLRGMSSTFSQRSHSIFDCLESAARQAPCSAPQTSVSDNGSFRRPVTPPSQTPARGLSRVHGNTGPTRVLPVPDYVSHPERWTKYSLEDVSEASEQSNRDAALAFLSSRSQVSHTDYVPSFNQDPSSCGEGRVVFTKPVRDSEARAERKRVLKKGVGSGAGGEAAVELAHLAGPEAEEWSGHQGQPEVVVPSEAAHPESSSGPIGVKAVGFHGSKKRSRDHFRNRDGNPGGPGSERGPSV.

Over residues 1 to 19 (MAETEAGLEADEPTEDDTL) the composition is skewed to acidic residues. The segment at 1-74 (MAETEAGLEA…PPTGTLTTAV (74 aa)) is disordered. Residues 20–37 (PSDTVSLSDSDSDLSLPS) are compositionally biased toward low complexity. Phosphoserine is present on residues S57, S64, S83, and S92. Residues 74–101 (VQPFHLRGMSSTFSQRSHSIFDCLESAA) form a hom2; mediates interaction with the U5 snRNP complexes and required for spliceosomal tri-snRNP complex assembly region. Residues 101 to 152 (ARQAPCSAPQTSVSDNGSFRRPVTPPSQTPARGLSRVHGNTGPTRVLPVPDY) are disordered. Polar residues predominate over residues 108–117 (APQTSVSDNG). The residue at position 124 (T124) is a Phosphothreonine. The tract at residues 146-300 (VLPVPDYVSH…SKKRSRDHFR (155 aa)) is interaction with SNRNP200. Positions 147 to 183 (LPVPDYVSHPERWTKYSLEDVSEASEQSNRDAALAFL) are hom3; mediates interaction with the U5 snRNP complexes. A hom4; necessary for interaction with the PRPF19 complex and required for spliceosomal tri-snRNP complex assembly region spans residues 198–238 (FNQDPSSCGEGRVVFTKPVRDSEARAERKRVLKKGVGSGAG). K214 is modified (N6-acetyllysine). The tract at residues 216 to 317 (VRDSEARAER…GPGSERGPSV (102 aa)) is disordered. The segment covering 240 to 250 (EAAVELAHLAG) has biased composition (low complexity).

The protein belongs to the TSSC4 family. Interacts in a RNA-independent manner with distinct U5 snRNP-containing complexes, the mono-U5 snRNP and the post-splicing U5 snRNP-PRPF19 complex. Interacts with SNRNP200; the interaction is direct, excludes recruitment of C9ORF78 and WBP4 to SNRNP200 and negatively regulates its RNA helicase activity. Interacts with PRPF8; the interaction is direct. As to expression, expressed in placenta. Widely expressed in embryo and newborn.

The protein localises to the nucleus. The protein resides in the cytoplasm. In terms of biological role, protein associated with the U5 snRNP, during its maturation and its post-splicing recycling and which is required for spliceosomal tri-snRNP complex assembly in the nucleus. Has a molecular sequestering activity and transiently hinders SNRNP200 binding sites for constitutive splicing factors that intervene later during the assembly of the spliceosome and splicing. Together with its molecular sequestering activity, may also function as a molecular adapter and placeholder, coordinating the assembly of the U5 snRNP and its association with the U4/U6 di-snRNP. In Mus musculus (Mouse), this protein is U5 small nuclear ribonucleoprotein TSSC4.